We begin with the raw amino-acid sequence, 226 residues long: Ribonuclease 3 (226 aa).

The 123-residue stretch at A6–N128 folds into the RNase III domain. E41 serves as a coordination point for Mg(2+). Residue D45 is part of the active site. Mg(2+) contacts are provided by N114 and E117. Residue E117 is part of the active site. The region spanning D155–V225 is the DRBM domain.

This sequence belongs to the ribonuclease III family. Homodimer. The cofactor is Mg(2+).

It localises to the cytoplasm. The catalysed reaction is Endonucleolytic cleavage to 5'-phosphomonoester.. Functionally, digests double-stranded RNA. Involved in the processing of primary rRNA transcript to yield the immediate precursors to the large and small rRNAs (23S and 16S). Processes some mRNAs, and tRNAs when they are encoded in the rRNA operon. Processes pre-crRNA and tracrRNA of type II CRISPR loci if present in the organism. This chain is Ribonuclease 3, found in Buchnera aphidicola subsp. Schizaphis graminum (strain Sg).